A 491-amino-acid chain; its full sequence is Immediate early protein IE1 (491 aa).

The span at 1–11 (MESSAKRKMDP) shows a compositional bias: basic and acidic residues. The segment at 1-24 (MESSAKRKMDPDNPDEGPSSKVPR) is nuclear localization signal. The segment at 1-30 (MESSAKRKMDPDNPDEGPSSKVPRPETPVT) is disordered. An interaction with host PML, interference with PML sumoylation and disruption of PML-associated nuclear bodies region spans residues 132-346 (ILDKVHEPFE…SVMKRRIEEI (215 aa)). Residues 373 to 445 (AIAEESDEEE…EEGAQEERED (73 aa)) form an interaction with host STAT2 region. Positions 410–420 (ATIPLSSVIVA) are modulation of STAT3/STAT1 signaling. Residues 410–445 (ATIPLSSVIVAENSDQEESEQSDEEEEEGAQEERED) form an interaction with host STAT3 region. The acidic stretch occupies residues 421 to 472 (ENSDQEESEQSDEEEEEGAQEEREDTVSVKSEPVSEIEEVAPEEEEDGAEEP). The disordered stretch occupies residues 421–491 (ENSDQEESEQ…PMVTRSKADQ (71 aa)). Over residues 423-444 (SDQEESEQSDEEEEEGAQEERE) the composition is skewed to acidic residues. Residues 449–452 (VKSE) are interaction with host SUMO1. A Glycyl lysine isopeptide (Lys-Gly) (interchain with G-Cter in SUMO) cross-link involves residue lysine 450. Positions 455–470 (SEIEEVAPEEEEDGAE) are enriched in acidic residues. The interval 475–491 (SGGKSTHPMVTRSKADQ) is chromosome-tethering domain (CTD), binding to histones.

It belongs to the HHV-5 IE1 protein family. Forms homodimers. Interacts with human p53/TP53; this interaction inhibits p53/TP53-dependent transactivation activity. Interacts with host STAT1. Interacts with host STAT2; this interaction promotes viral growth and counteracts the antiviral interferon response. May also interact with the host STAT1-STAT2 heterodimer. Interacts with host STAT3; this interaction leads to STAT3 nuclear accumulation and disruption of IL6-induced STAT3 phosphorylation. Interacts with host PML; this interaction inhibits host PML de novo sumoylation and probably inhibits PML regulation of type I and type II interferon-induced gene expression. Interacts with host DAXX. Interacts with host SP100. Interacts with host E2F1. Interacts with host RB1. Interacts with host HDAC1; this interaction inhibits histone deacetylation and promotes viral transcription. Interacts with host HDAC2; this interaction inhibits histone deacetylation and promotes viral transcription. Interacts with host HDAC3; this interaction inhibits histone deacetylation and promotes viral transcription. Interacts with host PLSCR1; this interaction inhibits IE1 transactivating activity. Sumoylated by host PML/nuclear domain 10. Sumoylation abolishes the interaction with host STAT2 and thus the IE1-mediated repression of interferon-stimulated genes.

Its subcellular location is the host nucleus. Its function is as follows. Plays an important role in transactivating viral early genes as well as activating its own promoter, probably by altering the viral chromatin structure. Expression of IE1 and IE2 proteins is critical for the establishment of lytic infection and reactivation from viral latency. Disrupts PML-associated ND10 nuclear bodies by interfering with host PML and SP100 sumoylation thereby altering the regulation of type I and type II interferon-induced gene expression. Promotes efficient viral growth by interacting with and directing host SP100 to degradation, leading to enhanced acetylation level of histones. In addition, functions in counteracting the host innate antiviral response. Inhibits the type I interferon pathway by directly interacting with and sequestrating host STAT2. Also targets type II interferon pathway by repressing IL6- and STAT3 target genes. Repression of STAT3 genes is due to STAT3 nuclear accumulation and disruption of IL6-induced STAT3 phosphorylation by IE1. This repression is followed by phosphorylation and activation of STAT1. Inhibits host ISG transcription by sequestering host ISGF3 in a PML- and STAT2- binding dependent manner. Alters host cell cycle progression, probably through its interaction with host E2F1 or RB1 that overcomes the RB1-mediated repression of E2F-responsive promoters. May act as a E3 ubiquitin ligase targeting several host proteins including HES1 and SP100A for ubiquitination and subsequent proteasomal degradation. Impairs the radial migration of immature neurons by downregulating Gap junction alpha-1 protein/GJA1 also via ubiquitination and degradation. This chain is Immediate early protein IE1 (UL123), found in Human cytomegalovirus (strain Towne) (HHV-5).